Reading from the N-terminus, the 216-residue chain is Protein E4.2 (216 aa).

This Pantherophis guttatus (Corn snake) protein is Protein E4.2.